The sequence spans 194 residues: Peptidyl-tRNA hydrolase (194 aa).

Tyr16 is a tRNA binding site. The active-site Proton acceptor is His21. Residues Phe67, Asn69, and Asn115 each coordinate tRNA.

The protein belongs to the PTH family. As to quaternary structure, monomer.

It is found in the cytoplasm. It carries out the reaction an N-acyl-L-alpha-aminoacyl-tRNA + H2O = an N-acyl-L-amino acid + a tRNA + H(+). Functionally, hydrolyzes ribosome-free peptidyl-tRNAs (with 1 or more amino acids incorporated), which drop off the ribosome during protein synthesis, or as a result of ribosome stalling. Its function is as follows. Catalyzes the release of premature peptidyl moieties from peptidyl-tRNA molecules trapped in stalled 50S ribosomal subunits, and thus maintains levels of free tRNAs and 50S ribosomes. This is Peptidyl-tRNA hydrolase from Salmonella heidelberg (strain SL476).